A 436-amino-acid chain; its full sequence is Adenylosuccinate synthetase (436 aa).

GTP contacts are provided by residues 12-18 and 40-42; these read GDEGKGK and GHT. Residue aspartate 13 is the Proton acceptor of the active site. Aspartate 13 and glycine 40 together coordinate Mg(2+). IMP contacts are provided by residues 13-16, 38-41, threonine 128, arginine 142, glutamine 223, threonine 238, and arginine 302; these read DEGK and NAGH. Histidine 41 acts as the Proton donor in catalysis. A substrate-binding site is contributed by 298 to 304; the sequence is TTTGRRR. Residues arginine 304, 330–332, and 412–414 contribute to the GTP site; these read KLD and SLG.

Belongs to the adenylosuccinate synthetase family. In terms of assembly, homodimer. Mg(2+) serves as cofactor.

It is found in the cytoplasm. It catalyses the reaction IMP + L-aspartate + GTP = N(6)-(1,2-dicarboxyethyl)-AMP + GDP + phosphate + 2 H(+). It functions in the pathway purine metabolism; AMP biosynthesis via de novo pathway; AMP from IMP: step 1/2. Plays an important role in the de novo pathway of purine nucleotide biosynthesis. Catalyzes the first committed step in the biosynthesis of AMP from IMP. The polypeptide is Adenylosuccinate synthetase (Prochlorococcus marinus (strain MIT 9301)).